Here is an 833-residue protein sequence, read N- to C-terminus: Copper-exporting P-type ATPase (833 aa).

HMA domains follow at residues 3 to 64 and 98 to 161; these read QTID…YGAT and ESQQ…YGAE. Positions 14, 17, 109, and 112 each coordinate Cu(+). The next 6 membrane-spanning stretches (helical) occupy residues 186-206, 217-237, 253-273, 283-303, 437-457, and 463-483; these read WQAI…MIGD, LWLA…GHFY, TLVA…NLWP, LYYE…MLEA, AVFV…WYFF, and IVYT…CALG. The active-site 4-aspartylphosphate intermediate is the D522. Mg(2+) is bound by residues D719 and D723. 2 consecutive transmembrane segments (helical) span residues 778–798 and 800–820; these read LGAF…LWPF and GTLL…ITVV.

This sequence belongs to the cation transport ATPase (P-type) (TC 3.A.3) family. Type IB subfamily.

Its subcellular location is the cell inner membrane. It localises to the cytoplasm. The catalysed reaction is Cu(+)(in) + ATP + H2O = Cu(+)(out) + ADP + phosphate + H(+). Its function is as follows. Involved in Cu(+) export. Essential for copper tolerance under both aerobic and anaerobic conditions. Functionally, probably also encodes a cytoplasmic copper chaperone CopA(Z) that is produced by programmed ribosomal frameshifting. The chain is Copper-exporting P-type ATPase (copA) from Salmonella typhimurium (strain LT2 / SGSC1412 / ATCC 700720).